Here is a 468-residue protein sequence, read N- to C-terminus: uncharacterized protein (468 aa).

Coiled coils occupy residues 10-94 (NEAL…VKEL) and 147-279 (FVEL…EASI). Residues 324–369 (TPRTVDPIPEGTIIKKESSDDAMFSGLKKSKPKKSNKSNNNQADSD) form a disordered region. Serine 342 is modified (phosphoserine). Residues 399 to 445 (VEQLKSRIAHFKEQQDSVTKQRIEKAKQEIEKLEAKYNSKEEKTLTE) adopt a coiled-coil conformation.

Its subcellular location is the cytoplasm. This is an uncharacterized protein from Schizosaccharomyces pombe (strain 972 / ATCC 24843) (Fission yeast).